A 207-amino-acid chain; its full sequence is Large ribosomal subunit protein uL4 (207 aa).

The interval 53–76 (TVSEVSGTTKKPFKQKGTGNARQG) is disordered.

Belongs to the universal ribosomal protein uL4 family. Part of the 50S ribosomal subunit.

Its function is as follows. One of the primary rRNA binding proteins, this protein initially binds near the 5'-end of the 23S rRNA. It is important during the early stages of 50S assembly. It makes multiple contacts with different domains of the 23S rRNA in the assembled 50S subunit and ribosome. In terms of biological role, forms part of the polypeptide exit tunnel. This chain is Large ribosomal subunit protein uL4, found in Rickettsia bellii (strain OSU 85-389).